The sequence spans 244 residues: Protein crossbronx (244 aa).

Residues 20 to 176 (QQEYKILAEY…VQKNIKESKE (157 aa)) form the UBC core domain. The tract at residues 209–244 (AGRSKQTEPSAQQANGGHATGLSWVKEGEFKPLSIE) is disordered.

This sequence belongs to the ubiquitin-conjugating enzyme family. FTS subfamily.

The polypeptide is Protein crossbronx (cbx) (Drosophila erecta (Fruit fly)).